Consider the following 316-residue polypeptide: Ribosomal RNA small subunit methyltransferase H (316 aa).

S-adenosyl-L-methionine-binding positions include 42–44 (GGH), Asp-62, Phe-86, Asp-104, and Gln-111.

It belongs to the methyltransferase superfamily. RsmH family.

It is found in the cytoplasm. It carries out the reaction cytidine(1402) in 16S rRNA + S-adenosyl-L-methionine = N(4)-methylcytidine(1402) in 16S rRNA + S-adenosyl-L-homocysteine + H(+). In terms of biological role, specifically methylates the N4 position of cytidine in position 1402 (C1402) of 16S rRNA. This is Ribosomal RNA small subunit methyltransferase H from Polynucleobacter asymbioticus (strain DSM 18221 / CIP 109841 / QLW-P1DMWA-1) (Polynucleobacter necessarius subsp. asymbioticus).